We begin with the raw amino-acid sequence, 148 residues long: Lysozyme-like protein 6 (148 aa).

The signal sequence occupies residues 1–19 (MTKALLIYLVSSFLALNQA). Residues 20 to 148 (SLISRCDLAQ…FYWLTGCRLR (129 aa)) form the C-type lysozyme domain. 4 cysteine pairs are disulfide-bonded: C25-C145, C49-C133, C83-C98, and C94-C112. Catalysis depends on residues E54 and D71.

The protein belongs to the glycosyl hydrolase 22 family. In terms of assembly, monomer. In terms of tissue distribution, expressed in testis, epididymis and spermatozoa (at protein level). Expressed in late-stage spermatocytes and round spermatids.

It localises to the secreted. The protein localises to the cell surface. The protein resides in the cell projection. It is found in the cilium. Its subcellular location is the flagellum. The enzyme catalyses Hydrolysis of (1-&gt;4)-beta-linkages between N-acetylmuramic acid and N-acetyl-D-glucosamine residues in a peptidoglycan and between N-acetyl-D-glucosamine residues in chitodextrins.. Its function is as follows. May be involved sperm-egg plasma membrane adhesion and fusion during fertilization. Exhibits bacteriolytic activity in vitro against Micrococcus luteus and Staphylococcus aureus. Shows weak bacteriolytic activity against Gram-positive bacteria at physiological pH. Bacteriolytic activity is pH-dependent, with a maximum at around pH 5.6. This Homo sapiens (Human) protein is Lysozyme-like protein 6 (LYZL6).